A 144-amino-acid polypeptide reads, in one-letter code: Large ribosomal subunit protein uL15 (144 aa).

Residues 1-57 (MKLNDLSPAPGSRREKHRPGRGIGSGLGKTGGRGHKGQTSRSGGTIAPGFEGGQQPL) form a disordered region. A compositionally biased stretch (gly residues) spans 21–31 (RGIGSGLGKTG).

Belongs to the universal ribosomal protein uL15 family. As to quaternary structure, part of the 50S ribosomal subunit.

In terms of biological role, binds to the 23S rRNA. In Pseudomonas fluorescens (strain ATCC BAA-477 / NRRL B-23932 / Pf-5), this protein is Large ribosomal subunit protein uL15.